The sequence spans 864 residues: Calphotin (864 aa).

The leucine-zipper stretch occupies residues 816-858; that stretch reads LQTTDVSLLAIAATLDAIGEKLKDQKARNQQVMDRLCEIEKIL.

Homodimer. As to expression, soma and axons of photoreceptor cells of compound eyes and ocelli.

It is found in the cytoplasm. Plays important roles in both rhabdomere development and in photoreceptor cell survival. Might function as a calcium-sequestering 'sponge' to regulate the amount of free cytoplasmic calcium. It binds 0.3 mole of Ca(2+) per mole of protein. The chain is Calphotin (Cpn) from Drosophila melanogaster (Fruit fly).